The primary structure comprises 189 residues: Inosine triphosphate pyrophosphatase (189 aa).

Position 14–19 (14–19) interacts with ITP; the sequence is TGNQNK. Glu-42 is a Mg(2+) binding site. ITP-binding positions include Lys-54, 70 to 71, Lys-87, 146 to 149, Lys-167, and 172 to 173; these read DT, FGWD, and HR.

It belongs to the HAM1 NTPase family. As to quaternary structure, homodimer. Mg(2+) is required as a cofactor. It depends on Mn(2+) as a cofactor.

It localises to the cytoplasm. The protein localises to the nucleus. It catalyses the reaction ITP + H2O = IMP + diphosphate + H(+). The enzyme catalyses dITP + H2O = dIMP + diphosphate + H(+). The catalysed reaction is XTP + H2O = XMP + diphosphate + H(+). In terms of biological role, pyrophosphatase that hydrolyzes non-canonical purine nucleotides such as inosine triphosphate (ITP), deoxyinosine triphosphate (dITP) or xanthosine 5'-triphosphate (XTP) to their respective monophosphate derivatives. The enzyme does not distinguish between the deoxy- and ribose forms. Probably excludes non-canonical purines from RNA and DNA precursor pools, thus preventing their incorporation into RNA and DNA and avoiding chromosomal lesions. This Pyricularia oryzae (strain 70-15 / ATCC MYA-4617 / FGSC 8958) (Rice blast fungus) protein is Inosine triphosphate pyrophosphatase.